The chain runs to 376 residues: D-alanine--D-alanine ligase (376 aa).

Residues 150–358 (KIIFEKEGLP…YSELINKLIE (209 aa)) form the ATP-grasp domain. An ATP-binding site is contributed by 183–238 (EGRLTYPCFVKPSNAGSSVGVNKASDRESLVKALNIAAKNDRRILVEEFINGREIE). Mg(2+) contacts are provided by Asp-311, Glu-325, and Asn-327.

The protein belongs to the D-alanine--D-alanine ligase family. Requires Mg(2+) as cofactor. Mn(2+) serves as cofactor.

Its subcellular location is the cytoplasm. The catalysed reaction is 2 D-alanine + ATP = D-alanyl-D-alanine + ADP + phosphate + H(+). Its pathway is cell wall biogenesis; peptidoglycan biosynthesis. Functionally, cell wall formation. This Ruminiclostridium cellulolyticum (strain ATCC 35319 / DSM 5812 / JCM 6584 / H10) (Clostridium cellulolyticum) protein is D-alanine--D-alanine ligase.